The primary structure comprises 231 residues: UPF0758 protein pc1765 (231 aa).

Residues 107–229 (LIEHSSHAYQ…YVSFKDQNLL (123 aa)) form the MPN domain. Positions 178, 180, and 191 each coordinate Zn(2+). The JAMM motif signature appears at 178-191 (HNHPSGDPMPSNQD).

The protein belongs to the UPF0758 family.

The protein is UPF0758 protein pc1765 of Protochlamydia amoebophila (strain UWE25).